The chain runs to 330 residues: Ketol-acid reductoisomerase (NADP(+)) (330 aa).

The region spanning 1 to 181 (MNVYYEQDAD…GGTKAGVIET (181 aa)) is the KARI N-terminal Rossmann domain. NADP(+) is bound by residues 24-27 (YGSQ), arginine 47, serine 50, serine 52, and 82-85 (DQTQ). Histidine 107 is an active-site residue. Glycine 133 lines the NADP(+) pocket. The 146-residue stretch at 182–327 (NFKDETETDL…AKLRNMMSWL (146 aa)) folds into the KARI C-terminal knotted domain. Mg(2+) is bound by residues aspartate 190, glutamate 194, glutamate 226, and glutamate 230. Substrate is bound at residue serine 251.

It belongs to the ketol-acid reductoisomerase family. Requires Mg(2+) as cofactor.

It catalyses the reaction (2R)-2,3-dihydroxy-3-methylbutanoate + NADP(+) = (2S)-2-acetolactate + NADPH + H(+). It carries out the reaction (2R,3R)-2,3-dihydroxy-3-methylpentanoate + NADP(+) = (S)-2-ethyl-2-hydroxy-3-oxobutanoate + NADPH + H(+). Its pathway is amino-acid biosynthesis; L-isoleucine biosynthesis; L-isoleucine from 2-oxobutanoate: step 2/4. The protein operates within amino-acid biosynthesis; L-valine biosynthesis; L-valine from pyruvate: step 2/4. Functionally, involved in the biosynthesis of branched-chain amino acids (BCAA). Catalyzes an alkyl-migration followed by a ketol-acid reduction of (S)-2-acetolactate (S2AL) to yield (R)-2,3-dihydroxy-isovalerate. In the isomerase reaction, S2AL is rearranged via a Mg-dependent methyl migration to produce 3-hydroxy-3-methyl-2-ketobutyrate (HMKB). In the reductase reaction, this 2-ketoacid undergoes a metal-dependent reduction by NADPH to yield (R)-2,3-dihydroxy-isovalerate. This is Ketol-acid reductoisomerase (NADP(+)) from Chlorobium luteolum (strain DSM 273 / BCRC 81028 / 2530) (Pelodictyon luteolum).